Consider the following 72-residue polypeptide: Translation initiation factor IF-1 (72 aa).

The region spanning 1–72 is the S1-like domain; the sequence is MSKDDVIEMQ…TRGRITWRAK (72 aa).

The protein belongs to the IF-1 family. As to quaternary structure, component of the 30S ribosomal translation pre-initiation complex which assembles on the 30S ribosome in the order IF-2 and IF-3, IF-1 and N-formylmethionyl-tRNA(fMet); mRNA recruitment can occur at any time during PIC assembly.

Its subcellular location is the cytoplasm. One of the essential components for the initiation of protein synthesis. Stabilizes the binding of IF-2 and IF-3 on the 30S subunit to which N-formylmethionyl-tRNA(fMet) subsequently binds. Helps modulate mRNA selection, yielding the 30S pre-initiation complex (PIC). Upon addition of the 50S ribosomal subunit IF-1, IF-2 and IF-3 are released leaving the mature 70S translation initiation complex. The polypeptide is Translation initiation factor IF-1 (Clostridium beijerinckii (strain ATCC 51743 / NCIMB 8052) (Clostridium acetobutylicum)).